The sequence spans 284 residues: Formamidopyrimidine-DNA glycosylase (284 aa).

The Schiff-base intermediate with DNA role is filled by Pro-2. Glu-3 acts as the Proton donor in catalysis. Lys-61 (proton donor; for beta-elimination activity) is an active-site residue. DNA contacts are provided by His-95, Arg-115, and Arg-157. An FPG-type zinc finger spans residues 243–277 (AVYGRAGQPCRRCGTAIVREPFMNRSSFRCPACQP). The Proton donor; for delta-elimination activity role is filled by Arg-267.

This sequence belongs to the FPG family. In terms of assembly, monomer. The cofactor is Zn(2+).

It catalyses the reaction Hydrolysis of DNA containing ring-opened 7-methylguanine residues, releasing 2,6-diamino-4-hydroxy-5-(N-methyl)formamidopyrimidine.. The enzyme catalyses 2'-deoxyribonucleotide-(2'-deoxyribose 5'-phosphate)-2'-deoxyribonucleotide-DNA = a 3'-end 2'-deoxyribonucleotide-(2,3-dehydro-2,3-deoxyribose 5'-phosphate)-DNA + a 5'-end 5'-phospho-2'-deoxyribonucleoside-DNA + H(+). Its function is as follows. Involved in base excision repair of DNA damaged by oxidation or by mutagenic agents. Acts as a DNA glycosylase that recognizes and removes damaged bases. Has a preference for oxidized purines, such as 7,8-dihydro-8-oxoguanine (8-oxoG). Has AP (apurinic/apyrimidinic) lyase activity and introduces nicks in the DNA strand. Cleaves the DNA backbone by beta-delta elimination to generate a single-strand break at the site of the removed base with both 3'- and 5'-phosphates. In Acidothermus cellulolyticus (strain ATCC 43068 / DSM 8971 / 11B), this protein is Formamidopyrimidine-DNA glycosylase.